We begin with the raw amino-acid sequence, 204 residues long: MPYTRHALREYERRSRVEQVLPPKADIFAWTRYAAPEDIKVVILGQDPYHSRGQAHGLAFSVNRGVPVPPSLQNIYAAVQKNFPGAPRPSHGCLEDWARRGVLLLNTSLTVRSGAPGSHSSLGWGRLVHAVLARLSAESGPLVFMLWGAHAQRAFGAAGKRHLVLTYSHPSPLSRAPFVHCTHFAEANAFLEQHGRGGVDWSIV.

D47 acts as the Proton acceptor in catalysis.

The protein belongs to the uracil-DNA glycosylase (UDG) superfamily. UNG family.

It localises to the host nucleus. It carries out the reaction Hydrolyzes single-stranded DNA or mismatched double-stranded DNA and polynucleotides, releasing free uracil.. Functionally, excises uracil residues from the DNA which can arise as a result of misincorporation of dUMP residues by DNA polymerase or deamination of cytosines. Therefore may reduce deleterious uracil incorporation into the viral genome, particularly in terminally differentiated cells which lack DNA repair enzymes. The chain is Uracil-DNA glycosylase (UL2) from Bos taurus (Bovine).